A 362-amino-acid polypeptide reads, in one-letter code: Class I histocompatibility antigen, Gogo-OKO alpha chain (362 aa).

Positions 1–24 are cleaved as a signal peptide; sequence MAVVAPRTLLLLLSGTLALTRTWA. Residues 25-114 form an alpha-1 region; sequence GSHSMRYFYT…LRGYYNQSEG (90 aa). Residues 25–308 are Extracellular-facing; the sequence is GSHSMRYFYT…EPSSQPTIPI (284 aa). N110 carries an N-linked (GlcNAc...) asparagine glycan. Residues 115–206 form an alpha-2 region; sequence GSHTIQRMYG…ENGKETLQRT (92 aa). Cystine bridges form between C125/C188 and C227/C283. Positions 207–298 are alpha-3; that stretch reads DPPKTHMTHH…GLPKPLTLRW (92 aa). In terms of domain architecture, Ig-like C1-type spans 209 to 295; sequence PKTHMTHHPV…QHEGLPKPLT (87 aa). Positions 299 to 308 are connecting peptide; it reads EPSSQPTIPI. The chain crosses the membrane as a helical span at residues 309 to 332; sequence VGIIAGLVLLGAVITGAVVAAMMW. The Cytoplasmic portion of the chain corresponds to 333–362; that stretch reads RKKSSGRKGGSYSQAASSDSAQGSDVSLTA. The disordered stretch occupies residues 337–362; the sequence is SGRKGGSYSQAASSDSAQGSDVSLTA. Positions 342-362 are enriched in low complexity; sequence GSYSQAASSDSAQGSDVSLTA.

Belongs to the MHC class I family. In terms of assembly, heterodimer of an alpha chain and a beta chain (beta-2-microglobulin).

Its subcellular location is the membrane. Functionally, involved in the presentation of foreign antigens to the immune system. In Gorilla gorilla gorilla (Western lowland gorilla), this protein is Class I histocompatibility antigen, Gogo-OKO alpha chain.